Consider the following 483-residue polypeptide: GTPase Der (483 aa).

EngA-type G domains lie at 3–167 (FTLA…GEER) and 212–387 (LRIA…EIWN). GTP-binding positions include 9-16 (GRPNVGKS), 56-60 (DTAGL), 119-122 (NKAE), 218-225 (GRPNAGKS), 265-269 (DTAGM), and 330-333 (NKWD). The region spanning 388 to 472 (RRISTGRLNR…PIRLSLRTSD (85 aa)) is the KH-like domain.

It belongs to the TRAFAC class TrmE-Era-EngA-EngB-Septin-like GTPase superfamily. EngA (Der) GTPase family. In terms of assembly, associates with the 50S ribosomal subunit.

In terms of biological role, GTPase that plays an essential role in the late steps of ribosome biogenesis. The protein is GTPase Der of Brucella abortus (strain 2308).